A 147-amino-acid chain; its full sequence is 3-dehydroquinate dehydratase (147 aa).

Tyr-23 serves as the catalytic Proton acceptor. Residues Asn-74, His-80, and Asp-87 each contribute to the substrate site. His-100 acts as the Proton donor in catalysis. Substrate-binding positions include Ile-101–Ser-102 and Arg-111.

It belongs to the type-II 3-dehydroquinase family. Homododecamer.

The catalysed reaction is 3-dehydroquinate = 3-dehydroshikimate + H2O. It participates in metabolic intermediate biosynthesis; chorismate biosynthesis; chorismate from D-erythrose 4-phosphate and phosphoenolpyruvate: step 3/7. In terms of biological role, catalyzes a trans-dehydration via an enolate intermediate. The chain is 3-dehydroquinate dehydratase from Prochlorococcus marinus (strain MIT 9301).